The chain runs to 320 residues: ATP-dependent 6-phosphofructokinase (320 aa).

ATP is bound at residue Gly11. Position 21 to 25 (21 to 25) interacts with ADP; that stretch reads RAVVR. Residues 72 to 73 and 102 to 105 contribute to the ATP site; these read RC and GDGS. Asp103 provides a ligand contact to Mg(2+). Substrate is bound at residue 125–127; the sequence is TID. Asp127 (proton acceptor) is an active-site residue. Arg154 is a binding site for ADP. Residues Arg162 and 169-171 contribute to the substrate site; that span reads MGR. Residues 185–187 and 214–216 each bind ADP; these read GAE and KTH. Substrate-binding positions include Glu223, Arg244, and 250-253; that span reads HIQR.

Belongs to the phosphofructokinase type A (PFKA) family. ATP-dependent PFK group I subfamily. Prokaryotic clade 'B1' sub-subfamily. Homotetramer. Mg(2+) is required as a cofactor.

It is found in the cytoplasm. The enzyme catalyses beta-D-fructose 6-phosphate + ATP = beta-D-fructose 1,6-bisphosphate + ADP + H(+). It participates in carbohydrate degradation; glycolysis; D-glyceraldehyde 3-phosphate and glycerone phosphate from D-glucose: step 3/4. With respect to regulation, allosterically activated by ADP and other diphosphonucleosides, and allosterically inhibited by phosphoenolpyruvate. Catalyzes the phosphorylation of D-fructose 6-phosphate to fructose 1,6-bisphosphate by ATP, the first committing step of glycolysis. The chain is ATP-dependent 6-phosphofructokinase from Clostridium botulinum (strain Eklund 17B / Type B).